Here is a 301-residue protein sequence, read N- to C-terminus: Quinolinate synthase (301 aa).

Residues His-21 and Ser-38 each coordinate iminosuccinate. Cys-83 is a binding site for [4Fe-4S] cluster. Iminosuccinate-binding positions include 109–111 and Ser-126; that span reads YIN. Residue Cys-169 participates in [4Fe-4S] cluster binding. Iminosuccinate-binding positions include 195–197 and Thr-212; that span reads HPE. Position 257 (Cys-257) interacts with [4Fe-4S] cluster.

It belongs to the quinolinate synthase family. Type 2 subfamily. The cofactor is [4Fe-4S] cluster.

It localises to the cytoplasm. The enzyme catalyses iminosuccinate + dihydroxyacetone phosphate = quinolinate + phosphate + 2 H2O + H(+). The protein operates within cofactor biosynthesis; NAD(+) biosynthesis; quinolinate from iminoaspartate: step 1/1. In terms of biological role, catalyzes the condensation of iminoaspartate with dihydroxyacetone phosphate to form quinolinate. The chain is Quinolinate synthase from Clostridium perfringens (strain 13 / Type A).